Reading from the N-terminus, the 249-residue chain is uncharacterized protein (249 aa).

A coiled-coil region spans residues 30-65; it reads KVDKLKKLEIKKLEDQKKLKEQEEKHRLTLIRLANA. The disordered stretch occupies residues 66–97; it reads PPQTNSINNNNNNNNNIKTNRPPLIYGEDKDK.

This is an uncharacterized protein from Dictyostelium discoideum (Social amoeba).